An 861-amino-acid polypeptide reads, in one-letter code: Leucine--tRNA ligase (861 aa).

The 'HIGH' region motif lies at P42–H52. The 'KMSKS' region signature appears at K620–S624. K623 contacts ATP.

It belongs to the class-I aminoacyl-tRNA synthetase family.

The protein resides in the cytoplasm. The enzyme catalyses tRNA(Leu) + L-leucine + ATP = L-leucyl-tRNA(Leu) + AMP + diphosphate. The polypeptide is Leucine--tRNA ligase (Marinobacter nauticus (strain ATCC 700491 / DSM 11845 / VT8) (Marinobacter aquaeolei)).